The chain runs to 635 residues: MGVPSPVRRVCVTVGALVALACMVLAGCTVSPPPAPQSTDTPRSTPPPPRRPTQIIMGIDWIGPGFNPHLLSDLSPVNAAISALVLPSAFRPIPDPNTPTGSRWEMDPTLLVSADVTNNHPFTVTYKIRPEAQWTDNAPIAADDFWYLWQQMVTQPGVVDPAGYHLITSVQSLEGGKQAVVTFAQPYPAWRELFTDILPAHIVKDIPGGFASGLARALPVTGGQFRVENIDPQRDEILIARNDRYWGPPSKPGIILFRRAGAPAALADSVRNGDTQVAQVHGGSAAFAQLSAIPDVRTARIVTPRVMQFTLRANVPKLADTQVRKAILGLLDVDLLAAVGAGTDNTVTLDQAQIRSPSDPGYVPTAPPAMSSAAALGLLEASGFQVDTNTSVSPAPSVPDSTTTSVSTGPPEVIRGRISKDGEQLTLVIGVAANDPTSVAVANTAADQLRDVGIAATVLALDPVTLYHDALNDNRVDAIVGWRQAGGNLATLLASRYGCPALQATTVPAANAPTTAPSAPIGPTPSAAPDTATPPPTAPRRPSDPGALVKAPSNLTGICDRSIQSNIDAALNGTKNINDVITAVEPRLWNMSTVLPILQDTTIVAAGPSVQNVSLSGAVPVGIVGDAGQWVKTGQ.

An N-terminal signal peptide occupies residues 1-26 (MGVPSPVRRVCVTVGALVALACMVLA). Disordered regions lie at residues 32–52 (PPPAPQSTDTPRSTPPPPRRP), 389–412 (NTSVSPAPSVPDSTTTSVSTGPPE), and 511–551 (NAPT…LVKA). Composition is skewed to low complexity over residues 390 to 411 (TSVSPAPSVPDSTTTSVSTGPP) and 511 to 531 (NAPTTAPSAPIGPTPSAAPDT).

This sequence belongs to the bacterial solute-binding protein 5 family.

It participates in phospholipid metabolism; phosphatidylinositol metabolism. In terms of biological role, may directly or indirectly regulate the accessibility of the key branch point intermediate, monoacyl phosphatidylinositol tetramannoside (AcPIM4), to the elongating alpha-1,6 mannosyltransferases which could regulate the lipoarabinomannans (LAMs) biosynthesis. This is Probable monoacyl phosphatidylinositol tetramannoside-binding protein LpqW (lpqW) from Mycobacterium tuberculosis (strain CDC 1551 / Oshkosh).